The chain runs to 346 residues: 3 beta-hydroxysteroid dehydrogenase/Delta 5--&gt;4-isomerase (346 aa).

The active-site Proton acceptor is the tyrosine 147. Lysine 151 provides a ligand contact to NAD(+).

Belongs to the 3-beta-HSD family.

It catalyses the reaction a 3beta-hydroxy-Delta(5)-steroid + NAD(+) = a 3-oxo-Delta(5)-steroid + NADH + H(+). It carries out the reaction a 3-oxo-Delta(5)-steroid = a 3-oxo-Delta(4)-steroid. Its pathway is lipid metabolism; steroid biosynthesis. Functionally, catalyzes the oxidative conversion of Delta(5)-ene-3-beta-hydroxy steroid, and the oxidative conversion of ketosteroids. The 3-beta-HSD enzymatic system plays a crucial role in the biosynthesis of all classes of hormonal steroids. During viral infection, steroid production contributes to virulence by inhibiting the host inflammatory response. The sequence is that of 3 beta-hydroxysteroid dehydrogenase/Delta 5--&gt;4-isomerase (OPG174) from Vaccinia virus (strain Western Reserve) (VACV).